Reading from the N-terminus, the 215-residue chain is E3 ubiquitin-protein ligase znrf1 (215 aa).

Disordered regions lie at residues 1 to 39 and 66 to 96; these read MGGKQSTAGRPRGAFPGVSTDDSAVPPSAHFGHYRPGGT and YTPRGTDSDRAGGGSGSDPAHNGNGYQETGG. Gly-2 carries the N-myristoyl glycine lipid modification. Residues 172-213 form an RING-type; atypical zinc finger; it reads CVICLEELQQGDTIARLPCLCIYHKSCIDSWFEINRSCPEHP.

It is found in the endosome. The protein resides in the lysosome. Its subcellular location is the membrane. It catalyses the reaction S-ubiquitinyl-[E2 ubiquitin-conjugating enzyme]-L-cysteine + [acceptor protein]-L-lysine = [E2 ubiquitin-conjugating enzyme]-L-cysteine + N(6)-ubiquitinyl-[acceptor protein]-L-lysine.. Its pathway is protein modification; protein ubiquitination. In terms of biological role, E3 ubiquitin-protein ligase that plays a role in neuron cells differentiation. Plays a role in the establishment and maintenance of neuronal transmission and plasticity. This Danio rerio (Zebrafish) protein is E3 ubiquitin-protein ligase znrf1 (znrf1).